A 201-amino-acid polypeptide reads, in one-letter code: ADP-ribosylation factor-related protein 1 (201 aa).

Position 1 is an N-acetylmethionine (Met-1). Residues 24 to 31 (GLDNAGKT), 75 to 79 (DLGGQ), and 134 to 137 (NKQD) contribute to the GTP site.

Belongs to the small GTPase superfamily. Arf family. Interacts with SYS1.

The protein localises to the golgi apparatus. Its subcellular location is the trans-Golgi network. Its function is as follows. Trans-Golgi-associated GTPase that regulates protein sorting. Controls the targeting of ARL1 and its effector to the trans-Golgi. Required for the lipidation of chylomicrons in the intestine and required for VLDL lipidation in the liver. The sequence is that of ADP-ribosylation factor-related protein 1 (Arfrp1) from Mus musculus (Mouse).